A 636-amino-acid chain; its full sequence is Ubiquitin-activating enzyme E1-like (636 aa).

ATP-binding positions include 28 to 33 (GAGGIG), Asp52, 60 to 63 (NLNR), Lys76, and 121 to 126 (DNLAAR). Positions 162 and 165 each coordinate Zn(2+). Cys177 (glycyl thioester intermediate) is an active-site residue. 2 residues coordinate Zn(2+): Cys435 and Cys438. The disordered stretch occupies residues 581 to 636 (DGIVILDDDEGEITIDAEPINGSKKRPVDTEISEAPSNKRTKLVNEPTNSDIVELD). Residues 586 to 595 (LDDDEGEITI) show a composition bias toward acidic residues. The short motif at 619-622 (KRTK) is the Nuclear localization signal element. A compositionally biased stretch (polar residues) spans 626-636 (EPTNSDIVELD).

It belongs to the ubiquitin-activating E1 family. As to quaternary structure, heterodimer of UBA2 and AOS1. The complex binds SMT3. In terms of processing, multiubiquitinated in vivo.

It localises to the nucleus. It participates in protein modification; protein sumoylation. Functionally, the dimeric enzyme acts as a SMT3 E1 ligase. It mediates ATP-dependent activation of SMT3 and formation of a thioester with a conserved cysteine residue on AOS1. The polypeptide is Ubiquitin-activating enzyme E1-like (UBA2) (Saccharomyces cerevisiae (strain ATCC 204508 / S288c) (Baker's yeast)).